The primary structure comprises 328 residues: Malate dehydrogenase (328 aa).

NAD(+) is bound at residue 11-17 (GAAGQIG). R94 and R100 together coordinate substrate. NAD(+) contacts are provided by residues N107, Q114, and 131-133 (VGN). Residues N133 and R164 each contribute to the substrate site. The active-site Proton acceptor is the H189.

Belongs to the LDH/MDH superfamily. MDH type 2 family.

It catalyses the reaction (S)-malate + NAD(+) = oxaloacetate + NADH + H(+). Catalyzes the reversible oxidation of malate to oxaloacetate. The chain is Malate dehydrogenase from Xylella fastidiosa (strain M23).